The following is a 111-amino-acid chain: Thioredoxin 2 (111 aa).

In terms of domain architecture, Thioredoxin spans 2–109 (SKGVITITDA…LLSFLDTHLN (108 aa)). Cysteines 33 and 36 form a disulfide.

This sequence belongs to the thioredoxin family.

Functionally, participates in various redox reactions through the reversible oxidation of its active center dithiol to a disulfide and catalyzes dithiol-disulfide exchange reactions. This is Thioredoxin 2 (trxB) from Nostoc sp. (strain PCC 7120 / SAG 25.82 / UTEX 2576).